We begin with the raw amino-acid sequence, 433 residues long: Glutamate-1-semialdehyde 2,1-aminomutase (433 aa).

Lysine 273 carries the post-translational modification N6-(pyridoxal phosphate)lysine.

The protein belongs to the class-III pyridoxal-phosphate-dependent aminotransferase family. HemL subfamily. In terms of assembly, homodimer. Pyridoxal 5'-phosphate serves as cofactor.

It localises to the cytoplasm. The catalysed reaction is (S)-4-amino-5-oxopentanoate = 5-aminolevulinate. It functions in the pathway porphyrin-containing compound metabolism; protoporphyrin-IX biosynthesis; 5-aminolevulinate from L-glutamyl-tRNA(Glu): step 2/2. It participates in porphyrin-containing compound metabolism; chlorophyll biosynthesis. In Crocosphaera subtropica (strain ATCC 51142 / BH68) (Cyanothece sp. (strain ATCC 51142)), this protein is Glutamate-1-semialdehyde 2,1-aminomutase.